Consider the following 500-residue polypeptide: Probable cytosol aminopeptidase (500 aa).

Mn(2+) is bound by residues Lys-264 and Asp-269. Lys-276 is an active-site residue. Residues Asp-287, Asp-346, and Glu-348 each coordinate Mn(2+). The active site involves Arg-350.

This sequence belongs to the peptidase M17 family. Mn(2+) serves as cofactor.

It localises to the cytoplasm. The catalysed reaction is Release of an N-terminal amino acid, Xaa-|-Yaa-, in which Xaa is preferably Leu, but may be other amino acids including Pro although not Arg or Lys, and Yaa may be Pro. Amino acid amides and methyl esters are also readily hydrolyzed, but rates on arylamides are exceedingly low.. The enzyme catalyses Release of an N-terminal amino acid, preferentially leucine, but not glutamic or aspartic acids.. Its function is as follows. Presumably involved in the processing and regular turnover of intracellular proteins. Catalyzes the removal of unsubstituted N-terminal amino acids from various peptides. The chain is Probable cytosol aminopeptidase from Nitrobacter hamburgensis (strain DSM 10229 / NCIMB 13809 / X14).